A 334-amino-acid chain; its full sequence is D-fructose 1,6-bisphosphatase class 2/sedoheptulose 1,7-bisphosphatase (334 aa).

Residues Asp33, Glu57, Asp85, and Glu88 each contribute to the Mn(2+) site. Residues 88-90 (EGT), Tyr119, 164-166 (RAR), and 186-188 (DGD) contribute to the substrate site. A Mn(2+)-binding site is contributed by Glu213.

It belongs to the FBPase class 2 family. As to quaternary structure, homotetramer. Mn(2+) serves as cofactor.

The enzyme catalyses beta-D-fructose 1,6-bisphosphate + H2O = beta-D-fructose 6-phosphate + phosphate. It catalyses the reaction D-sedoheptulose 1,7-bisphosphate + H2O = D-sedoheptulose 7-phosphate + phosphate. Its pathway is carbohydrate biosynthesis; Calvin cycle. Catalyzes the hydrolysis of fructose 1,6-bisphosphate (Fru 1,6-P2) and sedoheptulose 1,7-bisphosphate (Sed 1,7-P2) to fructose 6-phosphate and sedoheptulose 7-phosphate, respectively. The polypeptide is D-fructose 1,6-bisphosphatase class 2/sedoheptulose 1,7-bisphosphatase (Prochlorococcus marinus (strain MIT 9313)).